The chain runs to 160 residues: Arsenate reductase 2.1 (160 aa).

One can recognise a Rhodanese domain in the interval 42-143; that stretch reads SNPRVAIIDV…WELSGQPVCR (102 aa). The Cysteine persulfide intermediate role is filled by C94.

It carries out the reaction [glutaredoxin]-dithiol + arsenate + glutathione + H(+) = glutathionyl-S-S-[glutaredoxin] + arsenite + H2O. Possesses arsenate reductase activity in vitro. Catalyzes the reduction of arsenate [As(V)] to arsenite [As(III)]. May play a role in arsenic retention in roots. In terms of biological role, possesses phosphatase activity towards p-nitrophenyl phosphate in vitro. The polypeptide is Arsenate reductase 2.1 (ACR2.1) (Oryza sativa subsp. japonica (Rice)).